Consider the following 201-residue polypeptide: Superoxide dismutase [Mn] (201 aa).

Mn(2+) is bound by residues H27, H81, D163, and H167.

It belongs to the iron/manganese superoxide dismutase family. As to quaternary structure, homodimer. Mn(2+) is required as a cofactor.

The protein localises to the secreted. The catalysed reaction is 2 superoxide + 2 H(+) = H2O2 + O2. Its function is as follows. Destroys superoxide anion radicals which are normally produced within the cells and which are toxic to biological systems. The protein is Superoxide dismutase [Mn] (sodA) of Streptococcus pyogenes serotype M6 (strain ATCC BAA-946 / MGAS10394).